Here is a 101-residue protein sequence, read N- to C-terminus: NADH-quinone oxidoreductase subunit K (101 aa).

Transmembrane regions (helical) follow at residues 4 to 24 (LGHL…GIFL), 30 to 50 (IVLL…FIAF), and 62 to 82 (FVFF…AILV).

This sequence belongs to the complex I subunit 4L family. NDH-1 is composed of 14 different subunits. Subunits NuoA, H, J, K, L, M, N constitute the membrane sector of the complex.

Its subcellular location is the cell inner membrane. The enzyme catalyses a quinone + NADH + 5 H(+)(in) = a quinol + NAD(+) + 4 H(+)(out). NDH-1 shuttles electrons from NADH, via FMN and iron-sulfur (Fe-S) centers, to quinones in the respiratory chain. The immediate electron acceptor for the enzyme in this species is believed to be ubiquinone. Couples the redox reaction to proton translocation (for every two electrons transferred, four hydrogen ions are translocated across the cytoplasmic membrane), and thus conserves the redox energy in a proton gradient. The polypeptide is NADH-quinone oxidoreductase subunit K (Xanthomonas axonopodis pv. citri (strain 306)).